The chain runs to 203 residues: Urease accessory protein UreG (203 aa).

11–18 contributes to the GTP binding site; it reads GPVGSGKT.

This sequence belongs to the SIMIBI class G3E GTPase family. UreG subfamily. In terms of assembly, homodimer. UreD, UreF and UreG form a complex that acts as a GTP-hydrolysis-dependent molecular chaperone, activating the urease apoprotein by helping to assemble the nickel containing metallocenter of UreC. The UreE protein probably delivers the nickel.

The protein localises to the cytoplasm. Facilitates the functional incorporation of the urease nickel metallocenter. This process requires GTP hydrolysis, probably effectuated by UreG. This Prochlorococcus marinus (strain MIT 9215) protein is Urease accessory protein UreG.